A 212-amino-acid polypeptide reads, in one-letter code: Imidazole glycerol phosphate synthase subunit HisH (212 aa).

Residues 1-210 enclose the Glutamine amidotransferase type-1 domain; that stretch reads MIAVINYGAG…VRWSEAVQPK (210 aa). The active-site Nucleophile is the cysteine 79. Catalysis depends on residues histidine 185 and glutamate 187.

As to quaternary structure, heterodimer of HisH and HisF.

The protein localises to the cytoplasm. It catalyses the reaction 5-[(5-phospho-1-deoxy-D-ribulos-1-ylimino)methylamino]-1-(5-phospho-beta-D-ribosyl)imidazole-4-carboxamide + L-glutamine = D-erythro-1-(imidazol-4-yl)glycerol 3-phosphate + 5-amino-1-(5-phospho-beta-D-ribosyl)imidazole-4-carboxamide + L-glutamate + H(+). The catalysed reaction is L-glutamine + H2O = L-glutamate + NH4(+). It functions in the pathway amino-acid biosynthesis; L-histidine biosynthesis; L-histidine from 5-phospho-alpha-D-ribose 1-diphosphate: step 5/9. In terms of biological role, IGPS catalyzes the conversion of PRFAR and glutamine to IGP, AICAR and glutamate. The HisH subunit catalyzes the hydrolysis of glutamine to glutamate and ammonia as part of the synthesis of IGP and AICAR. The resulting ammonia molecule is channeled to the active site of HisF. This Chloroflexus aurantiacus (strain ATCC 29364 / DSM 637 / Y-400-fl) protein is Imidazole glycerol phosphate synthase subunit HisH.